The sequence spans 1357 residues: Kinectin (1357 aa).

The Cytoplasmic portion of the chain corresponds to 1 to 6; the sequence is MEFYES. The helical; Signal-anchor for type II membrane protein transmembrane segment at 7–29 threads the bilayer; it reads AYFIVLIPSIVITVIFLFFWLFM. At 30–1357 the chain is on the lumenal side; it reads KETLYDEVLA…KEKEHYQVLE (1328 aa). Disordered stretches follow at residues 48–81 and 103–218; these read IPTK…ESVP and NVVE…KQKT. Serine 75 bears the Phosphoserine; by FAM20C mark. Serine 77 bears the Phosphoserine mark. Residues 121–135 show a composition bias toward basic and acidic residues; sequence QKPVLEEQVIKESDA. Phosphothreonine is present on threonine 153. Serine 156 carries the post-translational modification Phosphoserine. A compositionally biased stretch (basic residues) spans 161 to 171; the sequence is SKKKPGQKKSK. 5 N-linked (GlcNAc...) asparagine glycosylation sites follow: asparagine 172, asparagine 435, asparagine 772, asparagine 904, and asparagine 1055. Residues 172-182 are compositionally biased toward basic and acidic residues; it reads NGSDDQDKKVE. A coiled-coil region spans residues 330–1356; that stretch reads LIHQLQEKDK…TKEKEHYQVL (1027 aa). Residue serine 1084 is modified to Phosphoserine. Asparagine 1088 and asparagine 1263 each carry an N-linked (GlcNAc...) asparagine glycan. Phosphoserine is present on serine 1313. A glycan (N-linked (GlcNAc...) asparagine) is linked at asparagine 1329.

This sequence belongs to the kinectin family. Parallel homodimers formed between the membrane-bound and the cytosolic form, and also between 2 cytosolic forms. As to expression, high levels in peripheral blood lymphocytes, testis and ovary, lower levels in spleen, thymus, prostate, small intestine and colon.

It is found in the endoplasmic reticulum membrane. Receptor for kinesin thus involved in kinesin-driven vesicle motility. Accumulates in integrin-based adhesion complexes (IAC) upon integrin aggregation by fibronectin. This is Kinectin (KTN1) from Homo sapiens (Human).